The sequence spans 38 residues: Photosystem II reaction center protein L (38 aa).

Residues 17-37 (SLYFGLLLIFVLAVLFSSYIF) form a helical membrane-spanning segment.

Belongs to the PsbL family. PSII is composed of 1 copy each of membrane proteins PsbA, PsbB, PsbC, PsbD, PsbE, PsbF, PsbH, PsbI, PsbJ, PsbK, PsbL, PsbM, PsbT, PsbX, PsbY, PsbZ, Psb30/Ycf12, at least 3 peripheral proteins of the oxygen-evolving complex and a large number of cofactors. It forms dimeric complexes.

It localises to the plastid. The protein localises to the chloroplast thylakoid membrane. In terms of biological role, one of the components of the core complex of photosystem II (PSII). PSII is a light-driven water:plastoquinone oxidoreductase that uses light energy to abstract electrons from H(2)O, generating O(2) and a proton gradient subsequently used for ATP formation. It consists of a core antenna complex that captures photons, and an electron transfer chain that converts photonic excitation into a charge separation. This subunit is found at the monomer-monomer interface and is required for correct PSII assembly and/or dimerization. This chain is Photosystem II reaction center protein L, found in Chlamydomonas moewusii (Chlamydomonas eugametos).